The chain runs to 462 residues: Integrator complex subunit 12 (462 aa).

Residues 39–132 are disordered; that stretch reads LARGIDSSYR…PETRSSPITV (94 aa). The segment covering 59-86 has biased composition (polar residues); sequence ISSTKTVSVKQEPKTSSSLPSGNNNGKV. K68 is covalently cross-linked (Glycyl lysine isopeptide (Lys-Gly) (interchain with G-Cter in SUMO2)). Positions 88–125 are enriched in basic and acidic residues; it reads TTEKVKKEGEKRPADKMKSDITEGADVPKKPRLEKPET. The residue at position 128 (S128) is a Phosphoserine. Residues 159–215 form a PHD-type zinc finger; sequence GLACVVCRQMTVASGNQLVECQECHNLYHQDCHKPQVTDKEVTDPRLVWYCARCTRQ. K254 is covalently cross-linked (Glycyl lysine isopeptide (Lys-Gly) (interchain with G-Cter in SUMO2)). Polar residues predominate over residues 305 to 328; sequence PSTAKLSSAAQNNSGKPATSSANQ. The tract at residues 305-462 is disordered; it reads PSTAKLSSAA…KKAAQKKLKK (158 aa). Composition is skewed to low complexity over residues 347-358 and 382-431; these read KIGSSNSTSPTV and VSKV…PSAS. The span at 434–443 shows a compositional bias: polar residues; sequence GPTSQESQLN. The span at 449-462 shows a compositional bias: basic residues; the sequence is QMVKKKAAQKKLKK.

Belongs to the Integrator subunit 12 family. Component of the Integrator complex, composed of core subunits INTS1, INTS2, INTS3, INTS4, INTS5, INTS6, INTS7, INTS8, INTS9/RC74, INTS10, INTS11/CPSF3L, INTS12, INTS13, INTS14 and INTS15. The core complex associates with protein phosphatase 2A subunits PPP2CA and PPP2R1A, to form the Integrator-PP2A (INTAC) complex. Post-translationally, dephosphorylated at Ser-128 by the PNUTS-PP1 complex, promoting RNA polymerase II transcription pause-release.

The protein resides in the nucleus. In terms of biological role, component of the integrator complex, a multiprotein complex that terminates RNA polymerase II (Pol II) transcription in the promoter-proximal region of genes. The integrator complex provides a quality checkpoint during transcription elongation by driving premature transcription termination of transcripts that are unfavorably configured for transcriptional elongation: the complex terminates transcription by (1) catalyzing dephosphorylation of the C-terminal domain (CTD) of Pol II subunit POLR2A/RPB1 and SUPT5H/SPT5, (2) degrading the exiting nascent RNA transcript via endonuclease activity and (3) promoting the release of Pol II from bound DNA. The integrator complex is also involved in terminating the synthesis of non-coding Pol II transcripts, such as enhancer RNAs (eRNAs), small nuclear RNAs (snRNAs), telomerase RNAs and long non-coding RNAs (lncRNAs). Mediates recruitment of cytoplasmic dynein to the nuclear envelope, probably as component of the integrator complex. The polypeptide is Integrator complex subunit 12 (INTS12) (Bos taurus (Bovine)).